Here is a 324-residue protein sequence, read N- to C-terminus: Putative exosome complex exonuclease RRP42 (324 aa).

It belongs to the RNase PH family. Component of the RNA exosome complex.

Its subcellular location is the nucleus. The protein resides in the nucleolus. It is found in the cytoplasm. In terms of biological role, non-catalytic component of the RNA exosome complex which has 3'-&gt;5' exoribonuclease activity and participates in a multitude of cellular RNA processing and degradation events. The polypeptide is Putative exosome complex exonuclease RRP42 (exosc7) (Dictyostelium discoideum (Social amoeba)).